A 662-amino-acid polypeptide reads, in one-letter code: Portal protein (662 aa).

Residues 1-26 (MHRASANSPLNSVSGSMMWRNQSSGR) show a composition bias toward polar residues. The segment at 1-35 (MHRASANSPLNSVSGSMMWRNQSSGRRPSKRLSDN) is disordered.

This sequence belongs to the herpesviridae portal protein family. Homododecamerizes. Interacts with terminase subunits TRM1 and TRM3.

The protein localises to the virion. It is found in the host nucleus. Forms a portal in the viral capsid through which viral DNA is translocated during DNA packaging. Assembles as a dodecamer at a single fivefold axe of the T=16 icosahedric capsid. Binds to the molecular motor that translocates the viral DNA, termed terminase. In Human herpesvirus 6B (strain Z29) (HHV-6 variant B), this protein is Portal protein (U76).